Reading from the N-terminus, the 102-residue chain is ATP-dependent Clp protease adapter protein ClpS (102 aa).

Belongs to the ClpS family. As to quaternary structure, binds to the N-terminal domain of the chaperone ClpA.

Its function is as follows. Involved in the modulation of the specificity of the ClpAP-mediated ATP-dependent protein degradation. This chain is ATP-dependent Clp protease adapter protein ClpS, found in Shewanella piezotolerans (strain WP3 / JCM 13877).